Consider the following 341-residue polypeptide: Holliday junction branch migration complex subunit RuvB (341 aa).

Residues 1 to 22 form a disordered region; the sequence is MSETAGKGVTMPEIMQSSYPDE. The large ATPase domain (RuvB-L) stretch occupies residues 4-193; that stretch reads TAGKGVTMPE…FGIISRLEFY (190 aa). ATP-binding positions include isoleucine 32, arginine 33, glycine 74, lysine 77, threonine 78, threonine 79, 140 to 142, arginine 183, tyrosine 193, and arginine 230; that span reads EDY. Mg(2+) is bound at residue threonine 78. Residues 194-264 are small ATPAse domain (RuvB-S); the sequence is TPEELSQIIL…LVNHALQKLD (71 aa). Residues 267–341 form a head domain (RuvB-H) region; it reads EKGLDQMDRK…KAYKHLNLTD (75 aa). DNA is bound by residues arginine 322 and arginine 327.

Belongs to the RuvB family. As to quaternary structure, homohexamer. Forms an RuvA(8)-RuvB(12)-Holliday junction (HJ) complex. HJ DNA is sandwiched between 2 RuvA tetramers; dsDNA enters through RuvA and exits via RuvB. An RuvB hexamer assembles on each DNA strand where it exits the tetramer. Each RuvB hexamer is contacted by two RuvA subunits (via domain III) on 2 adjacent RuvB subunits; this complex drives branch migration. In the full resolvosome a probable DNA-RuvA(4)-RuvB(12)-RuvC(2) complex forms which resolves the HJ.

The protein localises to the cytoplasm. The catalysed reaction is ATP + H2O = ADP + phosphate + H(+). Its function is as follows. The RuvA-RuvB-RuvC complex processes Holliday junction (HJ) DNA during genetic recombination and DNA repair, while the RuvA-RuvB complex plays an important role in the rescue of blocked DNA replication forks via replication fork reversal (RFR). RuvA specifically binds to HJ cruciform DNA, conferring on it an open structure. The RuvB hexamer acts as an ATP-dependent pump, pulling dsDNA into and through the RuvAB complex. RuvB forms 2 homohexamers on either side of HJ DNA bound by 1 or 2 RuvA tetramers; 4 subunits per hexamer contact DNA at a time. Coordinated motions by a converter formed by DNA-disengaged RuvB subunits stimulates ATP hydrolysis and nucleotide exchange. Immobilization of the converter enables RuvB to convert the ATP-contained energy into a lever motion, pulling 2 nucleotides of DNA out of the RuvA tetramer per ATP hydrolyzed, thus driving DNA branch migration. The RuvB motors rotate together with the DNA substrate, which together with the progressing nucleotide cycle form the mechanistic basis for DNA recombination by continuous HJ branch migration. Branch migration allows RuvC to scan DNA until it finds its consensus sequence, where it cleaves and resolves cruciform DNA. This chain is Holliday junction branch migration complex subunit RuvB, found in Lawsonia intracellularis (strain PHE/MN1-00).